A 664-amino-acid polypeptide reads, in one-letter code: Protein-arginine deiminase type-3 (664 aa).

It belongs to the protein arginine deiminase family. Requires Ca(2+) as cofactor. In terms of tissue distribution, epidermis and hair follicles.

The protein resides in the cytoplasm. It catalyses the reaction L-arginyl-[protein] + H2O = L-citrullyl-[protein] + NH4(+). Catalyzes the deimination of arginine residues of proteins. This Mus musculus (Mouse) protein is Protein-arginine deiminase type-3 (Padi3).